The following is a 101-amino-acid chain: Citrate lyase acyl carrier protein (101 aa).

An O-(phosphoribosyl dephospho-coenzyme A)serine modification is found at S14.

The protein belongs to the CitD family. As to quaternary structure, oligomer with a subunit composition of (alpha,beta,gamma)6.

It localises to the cytoplasm. Its function is as follows. Covalent carrier of the coenzyme of citrate lyase. This Streptococcus uberis (strain ATCC BAA-854 / 0140J) protein is Citrate lyase acyl carrier protein.